The sequence spans 161 residues: ATP synthase subunit b 1 (161 aa).

Residues 5 to 25 (PETWVAIAFLLLMGVFAYVGV) traverse the membrane as a helical segment.

The protein belongs to the ATPase B chain family. As to quaternary structure, F-type ATPases have 2 components, F(1) - the catalytic core - and F(0) - the membrane proton channel. F(1) has five subunits: alpha(3), beta(3), gamma(1), delta(1), epsilon(1). F(0) has three main subunits: a(1), b(2) and c(10-14). The alpha and beta chains form an alternating ring which encloses part of the gamma chain. F(1) is attached to F(0) by a central stalk formed by the gamma and epsilon chains, while a peripheral stalk is formed by the delta and b chains.

It is found in the cell inner membrane. Functionally, f(1)F(0) ATP synthase produces ATP from ADP in the presence of a proton or sodium gradient. F-type ATPases consist of two structural domains, F(1) containing the extramembraneous catalytic core and F(0) containing the membrane proton channel, linked together by a central stalk and a peripheral stalk. During catalysis, ATP synthesis in the catalytic domain of F(1) is coupled via a rotary mechanism of the central stalk subunits to proton translocation. Its function is as follows. Component of the F(0) channel, it forms part of the peripheral stalk, linking F(1) to F(0). This is ATP synthase subunit b 1 from Nitrobacter winogradskyi (strain ATCC 25391 / DSM 10237 / CIP 104748 / NCIMB 11846 / Nb-255).